The following is a 221-amino-acid chain: Ribosomal RNA large subunit methyltransferase E (221 aa).

Positions 60, 62, 89, 105, and 134 each coordinate S-adenosyl-L-methionine. Residue Lys-174 is the Proton acceptor of the active site. A disordered region spans residues 199-221 (KPKASRDKSSETFLLGRQLKHPG).

The protein belongs to the class I-like SAM-binding methyltransferase superfamily. RNA methyltransferase RlmE family.

It localises to the cytoplasm. It catalyses the reaction uridine(2552) in 23S rRNA + S-adenosyl-L-methionine = 2'-O-methyluridine(2552) in 23S rRNA + S-adenosyl-L-homocysteine + H(+). Functionally, specifically methylates the uridine in position 2552 of 23S rRNA at the 2'-O position of the ribose in the fully assembled 50S ribosomal subunit. This is Ribosomal RNA large subunit methyltransferase E from Ralstonia nicotianae (strain ATCC BAA-1114 / GMI1000) (Ralstonia solanacearum).